The chain runs to 237 residues: Ribosomal RNA large subunit methyltransferase E (237 aa).

G80, W82, D108, D124, and D148 together coordinate S-adenosyl-L-methionine. The active-site Proton acceptor is the K188.

Belongs to the class I-like SAM-binding methyltransferase superfamily. RNA methyltransferase RlmE family.

It is found in the cytoplasm. It catalyses the reaction uridine(2552) in 23S rRNA + S-adenosyl-L-methionine = 2'-O-methyluridine(2552) in 23S rRNA + S-adenosyl-L-homocysteine + H(+). In terms of biological role, specifically methylates the uridine in position 2552 of 23S rRNA at the 2'-O position of the ribose in the fully assembled 50S ribosomal subunit. The polypeptide is Ribosomal RNA large subunit methyltransferase E (Jannaschia sp. (strain CCS1)).